The primary structure comprises 367 residues: GDSL esterase/lipase At4g28780 (367 aa).

Residues 1 to 28 form the signal peptide; it reads MSTFLLTWIIMTVALSVTLFLMPQQTNA. The Nucleophile role is filled by serine 38. Residue asparagine 119 is glycosylated (N-linked (GlcNAc...) asparagine). Active-site residues include aspartate 328 and histidine 331. Asparagine 356 carries N-linked (GlcNAc...) asparagine glycosylation.

It belongs to the 'GDSL' lipolytic enzyme family.

It localises to the secreted. This Arabidopsis thaliana (Mouse-ear cress) protein is GDSL esterase/lipase At4g28780.